We begin with the raw amino-acid sequence, 37 residues long: Large ribosomal subunit protein bL36c (37 aa).

The protein belongs to the bacterial ribosomal protein bL36 family.

The protein localises to the plastid. The chain is Large ribosomal subunit protein bL36c (rpl36) from Epifagus virginiana (Beechdrops).